The sequence spans 545 residues: Glucose-6-phosphate isomerase (545 aa).

Catalysis depends on glutamate 351, which acts as the Proton donor. Active-site residues include histidine 382 and lysine 510.

Belongs to the GPI family.

It localises to the cytoplasm. The catalysed reaction is alpha-D-glucose 6-phosphate = beta-D-fructose 6-phosphate. Its pathway is carbohydrate biosynthesis; gluconeogenesis. It participates in carbohydrate degradation; glycolysis; D-glyceraldehyde 3-phosphate and glycerone phosphate from D-glucose: step 2/4. Its function is as follows. Catalyzes the reversible isomerization of glucose-6-phosphate to fructose-6-phosphate. The polypeptide is Glucose-6-phosphate isomerase (Shewanella denitrificans (strain OS217 / ATCC BAA-1090 / DSM 15013)).